Here is a 123-residue protein sequence, read N- to C-terminus: Ribonuclease P protein component (123 aa).

It belongs to the RnpA family. Consists of a catalytic RNA component (M1 or rnpB) and a protein subunit.

The catalysed reaction is Endonucleolytic cleavage of RNA, removing 5'-extranucleotides from tRNA precursor.. Its function is as follows. RNaseP catalyzes the removal of the 5'-leader sequence from pre-tRNA to produce the mature 5'-terminus. It can also cleave other RNA substrates such as 4.5S RNA. The protein component plays an auxiliary but essential role in vivo by binding to the 5'-leader sequence and broadening the substrate specificity of the ribozyme. The chain is Ribonuclease P protein component from Streptomyces bikiniensis.